The following is a 193-amino-acid chain: Rho-related protein racB (193 aa).

GTP-binding residues include Ala13, Gly15, Lys16, Thr17, Cys18, Tyr32, Thr35, Gly60, Lys116, Asp118, and Ala159. Residue Thr17 participates in Mg(2+) binding. 2 short sequence motifs (switch) span residues 26–37 and 57–75; these read NAFPTEYVPTVF and DTAGQEDYDRIRPLSYPQT. Thr35 contributes to the Mg(2+) binding site. Cysteine methyl ester is present on Cys190. Residue Cys190 is the site of S-geranylgeranyl cysteine attachment. Residues 191–193 constitute a propeptide, removed in mature form; it reads LIF.

The protein belongs to the small GTPase superfamily. Rho family. It depends on Mg(2+) as a cofactor.

Its subcellular location is the cell membrane. The protein resides in the cytoplasm. It is found in the cytoskeleton. It carries out the reaction GTP + H2O = GDP + phosphate + H(+). Its activity is regulated as follows. Regulated by guanine nucleotide exchange factors (GEFs) which promote the exchange of bound GDP for free GTP, GTPase activating proteins (GAPs) which increase the GTP hydrolysis activity, and GDP dissociation inhibitors which inhibit the dissociation of the nucleotide from the GTPase. Its function is as follows. Small GTPase which cycles between active GTP-bound and inactive GDP-bound states. The chain is Rho-related protein racB from Entamoeba histolytica (strain ATCC 30459 / HM-1:IMSS / ABRM).